A 148-amino-acid chain; its full sequence is Small ribosomal subunit protein uS13 (148 aa).

The tract at residues 128–148 is disordered; the sequence is RGQRTKSTGRRGSTIGVRKKK.

Belongs to the universal ribosomal protein uS13 family. Part of the 30S ribosomal subunit. Forms a loose heterodimer with protein S19. Forms two bridges to the 50S subunit in the 70S ribosome.

Its function is as follows. Located at the top of the head of the 30S subunit, it contacts several helices of the 16S rRNA. In the 70S ribosome it contacts the 23S rRNA (bridge B1a) and protein L5 of the 50S subunit (bridge B1b), connecting the 2 subunits; these bridges are implicated in subunit movement. This Methanococcoides burtonii (strain DSM 6242 / NBRC 107633 / OCM 468 / ACE-M) protein is Small ribosomal subunit protein uS13.